A 78-amino-acid chain; its full sequence is DNA-directed RNA polymerase subunit Rpo5 (78 aa).

Belongs to the archaeal Rpo5/eukaryotic RPB5 RNA polymerase subunit family. Part of the RNA polymerase complex.

It localises to the cytoplasm. The catalysed reaction is RNA(n) + a ribonucleoside 5'-triphosphate = RNA(n+1) + diphosphate. In terms of biological role, DNA-dependent RNA polymerase (RNAP) catalyzes the transcription of DNA into RNA using the four ribonucleoside triphosphates as substrates. This chain is DNA-directed RNA polymerase subunit Rpo5, found in Methanosarcina acetivorans (strain ATCC 35395 / DSM 2834 / JCM 12185 / C2A).